A 427-amino-acid chain; its full sequence is 3-isopropylmalate dehydratase large subunit (427 aa).

The [4Fe-4S] cluster site is built by C308, C368, and C371.

The protein belongs to the aconitase/IPM isomerase family. LeuC type 2 subfamily. Heterodimer of LeuC and LeuD. The cofactor is [4Fe-4S] cluster.

It carries out the reaction (2R,3S)-3-isopropylmalate = (2S)-2-isopropylmalate. It functions in the pathway amino-acid biosynthesis; L-leucine biosynthesis; L-leucine from 3-methyl-2-oxobutanoate: step 2/4. In terms of biological role, catalyzes the isomerization between 2-isopropylmalate and 3-isopropylmalate, via the formation of 2-isopropylmaleate. This chain is 3-isopropylmalate dehydratase large subunit, found in Geobacter sulfurreducens (strain ATCC 51573 / DSM 12127 / PCA).